Reading from the N-terminus, the 380-residue chain is Palmitoyltransferase ZDHHC18 (380 aa).

Residues 1–59 (MKDCEYQQISPGAAPPPASPGARRPGPAAPPAPSPGPAPGAPRWSGSGSGSGSLGRRPR) form a disordered region. The Cytoplasmic portion of the chain corresponds to 1–82 (MKDCEYQQIS…CGGRLMLAGH (82 aa)). A Phosphoserine modification is found at Ser19. A compositionally biased stretch (pro residues) spans 27–40 (PAAPPAPSPGPAPG). The helical transmembrane segment at 83–103 (GGVFALTLLLILSTTILFFVF) threads the bilayer. At 104 to 111 (DCPYLART) the chain is on the lumenal side. The chain crosses the membrane as a helical span at residues 112–132 (LTLAIPIIAAILFFFVMSCLL). At 133–227 (QTSFTDPGIL…GNCVGRRNYR (95 aa)) the chain is on the cytoplasmic side. Residues 184–234 (KYCFTCKMFRPPRTSHCSVCDNCVERFDHHCPWVGNCVGRRNYRFFYAFIL) enclose the DHHC domain. Cys214 serves as the catalytic S-palmitoyl cysteine intermediate. A helical transmembrane segment spans residues 228–248 (FFYAFILSLSFLTAFIFACVV). Residues 249–269 (THLTLLSQGSNFLSALKKTPA) are Lumenal-facing. Residues 270–290 (SVLELVICFFSIWSILGLSGF) traverse the membrane as a helical segment. The Cytoplasmic segment spans residues 291–380 (HTYLVASNLT…PDASMVGGHP (90 aa)). A disordered region spans residues 355 to 380 (ALPSPIRSDDPACGAKPDASMVGGHP).

The protein belongs to the DHHC palmitoyltransferase family. ERF2/ZDHHC9 subfamily. As to expression, ubiquitously expressed.

The protein localises to the golgi apparatus membrane. The enzyme catalyses L-cysteinyl-[protein] + hexadecanoyl-CoA = S-hexadecanoyl-L-cysteinyl-[protein] + CoA. Its function is as follows. Palmitoyltransferase that catalyzes the addition of palmitate onto various protein substrates, such as CGAS, HRAS and LCK. Palmitoylates HRAS and LCK. Acts as a negative regulator of the cGAS-STING pathway be mediating palmitoylation and inactivation of CGAS. May also have a palmitoyltransferase activity toward the beta-2 adrenergic receptor/ADRB2 and therefore regulate G protein-coupled receptor signaling. The polypeptide is Palmitoyltransferase ZDHHC18 (Mus musculus (Mouse)).